The chain runs to 243 residues: MLPFWIALQFLSSLPVRLPGMPRPEELGRSLLFYPLVGLLFGVLLWVLNAMLGGVPLLLHAALLLTAWVLLSGGLHLDGLADSADAWLGGFGDRERTLSIMKDPRSGPIAVVTLVLVLLLKFTALVALIEQQQGFALLLAPLIGRGALLGLFLCTPYVRAGGLGQALADHLPRVAGRQVLGLSVLACLLLGGYSGLWAVLLATVLFFWLRQVMMRRLGGTTGDTAGAVLELLETAVLLGVALF.

A run of 5 helical transmembrane segments spans residues 31 to 48, 61 to 81, 109 to 129, 134 to 154, and 188 to 208; these read LLFY…LWVL, AALL…DGLA, IAVV…VALI, GFAL…LFLC, and LLLG…LFFW.

It belongs to the CobS family. The cofactor is Mg(2+).

It is found in the cell inner membrane. It catalyses the reaction alpha-ribazole + adenosylcob(III)inamide-GDP = adenosylcob(III)alamin + GMP + H(+). The catalysed reaction is alpha-ribazole 5'-phosphate + adenosylcob(III)inamide-GDP = adenosylcob(III)alamin 5'-phosphate + GMP + H(+). Its pathway is cofactor biosynthesis; adenosylcobalamin biosynthesis; adenosylcobalamin from cob(II)yrinate a,c-diamide: step 7/7. Joins adenosylcobinamide-GDP and alpha-ribazole to generate adenosylcobalamin (Ado-cobalamin). Also synthesizes adenosylcobalamin 5'-phosphate from adenosylcobinamide-GDP and alpha-ribazole 5'-phosphate. The polypeptide is Adenosylcobinamide-GDP ribazoletransferase (Pseudomonas fluorescens (strain ATCC BAA-477 / NRRL B-23932 / Pf-5)).